We begin with the raw amino-acid sequence, 292 residues long: Homoserine kinase (292 aa).

84–94 (PLARGMGSSSA) serves as a coordination point for ATP.

Belongs to the GHMP kinase family. Homoserine kinase subfamily.

It is found in the cytoplasm. The catalysed reaction is L-homoserine + ATP = O-phospho-L-homoserine + ADP + H(+). The protein operates within amino-acid biosynthesis; L-threonine biosynthesis; L-threonine from L-aspartate: step 4/5. In terms of biological role, catalyzes the ATP-dependent phosphorylation of L-homoserine to L-homoserine phosphate. The chain is Homoserine kinase from Thermus thermophilus (strain ATCC BAA-163 / DSM 7039 / HB27).